Consider the following 142-residue polypeptide: Large ribosomal subunit protein uL16 (142 aa).

The segment covering 1 to 14 has biased composition (basic residues); it reads MLSPRRTKFRKQQR. The interval 1-22 is disordered; that stretch reads MLSPRRTKFRKQQRGRMTGKAT.

The protein belongs to the universal ribosomal protein uL16 family. Part of the 50S ribosomal subunit.

Functionally, binds 23S rRNA and is also seen to make contacts with the A and possibly P site tRNAs. In Synechococcus elongatus (strain ATCC 33912 / PCC 7942 / FACHB-805) (Anacystis nidulans R2), this protein is Large ribosomal subunit protein uL16.